We begin with the raw amino-acid sequence, 846 residues long: Exonuclease 1 (846 aa).

The segment at 1–99 (MGIQGLLQFI…RSRRERRQAN (99 aa)) is N-domain. Residues Asp-30, Asp-78, Glu-150, Asp-152, Asp-171, Asp-173, Asp-225, and Asp-270 each coordinate Mg(2+). The tract at residues 129 to 387 (MAHKVIKAAR…RPESGTVSDA (259 aa)) is interaction with MSH3. The tract at residues 138–229 (RSQGVDCLVA…ILSGCDYLSS (92 aa)) is I-domain. The segment at 372–396 (HRNYSPRPESGTVSDAPQLKENPST) is disordered. Ser-376 bears the Phosphoserine mark. Residues 382-396 (GTVSDAPQLKENPST) are compositionally biased toward polar residues. The tract at residues 388 to 490 (PQLKENPSTV…NKFATFLQRK (103 aa)) is interaction with MLH1. Positions 418-421 (KRPR) match the Nuclear localization signal motif. Ser-422 and Ser-454 each carry phosphoserine. Lys-482 carries the post-translational modification N6-acetyllysine. Position 581 is a phosphothreonine (Thr-581). A phosphoserine mark is found at Ser-598 and Ser-610. Residues 600–846 (PTLGTLRSCF…CGRVQRAIFQ (247 aa)) form an interaction with MSH2 region. Residues 618 to 781 (FSRTPSPSPS…SIQKRKHHNA (164 aa)) form a disordered region. 2 stretches are compositionally biased toward polar residues: residues 620-631 (RTPSPSPSTALQ) and 639-654 (SPTSLPENNMSDVSQL). The residue at position 621 (Thr-621) is a Phosphothreonine. Phosphoserine is present on residues Ser-623, Ser-639, Ser-660, and Ser-674. Residues 655–671 (KSEESSDDESHPLREEA) show a composition bias toward basic and acidic residues. Polar residues-rich tracts occupy residues 672–689 (CSSQSQESGEFSLQSSNA), 713–722 (DSQSDQTSKL), and 743–754 (KSSSADSLSTTK). Ser-714 carries the phosphoserine; by ATR modification. Ser-746 carries the post-translational modification Phosphoserine. The tract at residues 787–846 (LQIKLNELWKNFGFKKDSEKLPPCKKPLSPVRDNIQLTPEAEEDIFNKPECGRVQRAIFQ) is interaction with MLH1.

Belongs to the XPG/RAD2 endonuclease family. EXO1 subfamily. As to quaternary structure, interacts with the MLH1-PMS2 heterodimer via MLH1. Interacts with MSH3. Interacts with the MSH2-MSH6 heterodimer via MSH2, and this interaction may increase the processivity of the 5'-&gt;3' exonuclease activity. Interacts with PCNA, and this interaction may both stimulate the cryptic 3'-&gt;5' exonuclease activity and suppress the 5'-&gt;3' exonuclease activity. Interacts with WRN, and this interaction stimulates both the 5'-&gt;3' exonuclease activity and cleavage of 5'-overhanging flap structures. Interacts with RECQL/RECQ1, and this interaction stimulates cleavage of 5'-overhanging flap structures. Interacts with DNA helicase ZGRF1; the interaction is increased following DNA damage induction. The cofactor is Mg(2+). Phosphorylated upon DNA damage and in response to agents stalling DNA replication, probably by ATM or ATR. Phosphorylation at Ser-454, Thr-621 and Ser-714 is induced upon DNA-damage caused by treatment with hydroxyurea (HU) but not upon IR treatment. The HU-induced EXO1 triple phosphorylation facilitates destabilization/degradation of the protein. Highly expressed in bone marrow, testis and thymus. Expressed at lower levels in colon, lymph nodes, ovary, placenta, prostate, small intestine, spleen and stomach.

The protein localises to the nucleus. Its function is as follows. 5'-&gt;3' double-stranded DNA exonuclease which may also possess a cryptic 3'-&gt;5' double-stranded DNA exonuclease activity. Functions in DNA mismatch repair (MMR) to excise mismatch-containing DNA tracts directed by strand breaks located either 5' or 3' to the mismatch. Also exhibits endonuclease activity against 5'-overhanging flap structures similar to those generated by displacement synthesis when DNA polymerase encounters the 5'-end of a downstream Okazaki fragment. Required for somatic hypermutation (SHM) and class switch recombination (CSR) of immunoglobulin genes. Essential for male and female meiosis. This Homo sapiens (Human) protein is Exonuclease 1 (EXO1).